The primary structure comprises 387 residues: 3-ketoacyl-CoA thiolase (387 aa).

The Acyl-thioester intermediate role is filled by C91. Active-site proton acceptor residues include H343 and C373.

The protein belongs to the thiolase-like superfamily. Thiolase family. As to quaternary structure, heterotetramer of two alpha chains (FadB) and two beta chains (FadA).

It is found in the cytoplasm. It catalyses the reaction an acyl-CoA + acetyl-CoA = a 3-oxoacyl-CoA + CoA. Its pathway is lipid metabolism; fatty acid beta-oxidation. In terms of biological role, catalyzes the final step of fatty acid oxidation in which acetyl-CoA is released and the CoA ester of a fatty acid two carbons shorter is formed. This is 3-ketoacyl-CoA thiolase from Vibrio vulnificus (strain CMCP6).